The primary structure comprises 510 residues: Bone morphogenetic protein 6 (510 aa).

A signal peptide spans 1–20 (MPGLGRRAQWLCWWWGLLCS). The propeptide occupies 21-371 (CGPPPLRPPL…VSEVHVRTTR (351 aa)). 2 disordered regions span residues 87–129 (PHRP…RLKS) and 143–199 (NDDE…PLTS). Residues 106–116 (PQQQQQQQQQQ) are compositionally biased toward low complexity. N-linked (GlcNAc...) asparagine glycans are attached at residues Asn-238, Asn-266, Asn-383, Asn-401, and Asn-451. The segment at 370-402 (TRSASSRRRQQSRNRSTQSQDVSRGSGSSDYNG) is disordered. A compositionally biased stretch (polar residues) spans 390–401 (DVSRGSGSSDYN). Cystine bridges form between Cys-409/Cys-475, Cys-438/Cys-507, and Cys-442/Cys-509.

This sequence belongs to the TGF-beta family. As to quaternary structure, interacts with SOSTDC1. Interacts (when glycosylated) with type I receptor ACVR1; the interaction may induce HAMP expression. Interacts with type II receptor ACVR2B. Interacts with Hemojuvelin/HJV. Interacts with ERFE; the interaction inhibits BMP-induced transcription of HAMP. Interacts with BMPR1A/ALK3. Forms heterodimers with BMP2 in vitro; the heterodimer then binds to its receptor BMPR1A /ALK3 and may induce HAMP expression. Expressed in the lung. Low levels seen in the kidney.

The protein localises to the secreted. In terms of biological role, growth factor of the TGF-beta superfamily that plays essential roles in many developmental processes including cartilage and bone formation. Also plays an important role in the regulation of HAMP/hepcidin expression and iron metabolism by acting as a ligand for hemojuvelin/HJV. Also acts to promote expression of HAMP, potentially via the interaction with its receptor BMPR1A/ALK3. Initiates the canonical BMP signaling cascade by associating with type I receptor ACVR1 and type II receptor ACVR2B. In turn, ACVR1 propagates signal by phosphorylating SMAD1/5/8 that travel to the nucleus and act as activators and repressors of transcription of target. Can also signal through non-canonical pathway such as TAZ-Hippo signaling cascade to modulate VEGF signaling by regulating VEGFR2 expression. The chain is Bone morphogenetic protein 6 (Bmp6) from Mus musculus (Mouse).